We begin with the raw amino-acid sequence, 339 residues long: Ribosomal RNA small subunit methyltransferase H (339 aa).

Residues 56–58, D76, F102, D123, and Q130 contribute to the S-adenosyl-L-methionine site; that span reads GGH. 2 disordered regions span residues 274 to 309 and 320 to 339; these read RHSR…KAEV and LRVA…PQHS. The span at 325–339 shows a compositional bias: polar residues; it reads RTDTPYNTDPSPQHS.

This sequence belongs to the methyltransferase superfamily. RsmH family.

Its subcellular location is the cytoplasm. It carries out the reaction cytidine(1402) in 16S rRNA + S-adenosyl-L-methionine = N(4)-methylcytidine(1402) in 16S rRNA + S-adenosyl-L-homocysteine + H(+). Functionally, specifically methylates the N4 position of cytidine in position 1402 (C1402) of 16S rRNA. In Psychrobacter sp. (strain PRwf-1), this protein is Ribosomal RNA small subunit methyltransferase H.